The chain runs to 305 residues: GTPase Era (305 aa).

In terms of domain architecture, Era-type G spans 13–181 (RCGYVAIVGR…EKLVAERLPE (169 aa)). Residues 21–28 (GRPNVGKS) are G1. 21–28 (GRPNVGKS) lines the GTP pocket. Residues 47–51 (QTTRH) form a G2 region. The interval 68–71 (DTPG) is G3. Residues 68–72 (DTPGL) and 130–133 (NKTD) each bind GTP. The tract at residues 130-133 (NKTD) is G4. The interval 160 to 162 (ISA) is G5. Residues 204-288 (VREKIMRQLG…MLNLWVKVKG (85 aa)) form the KH type-2 domain.

This sequence belongs to the TRAFAC class TrmE-Era-EngA-EngB-Septin-like GTPase superfamily. Era GTPase family. As to quaternary structure, monomer.

It localises to the cytoplasm. It is found in the cell inner membrane. Functionally, an essential GTPase that binds both GDP and GTP, with rapid nucleotide exchange. Plays a role in 16S rRNA processing and 30S ribosomal subunit biogenesis and possibly also in cell cycle regulation and energy metabolism. This chain is GTPase Era, found in Pseudomonas aeruginosa (strain LESB58).